Here is a 127-residue protein sequence, read N- to C-terminus: Protein HI_1253 (127 aa).

Helical transmembrane passes span 13 to 33 (VIML…LLVI), 61 to 81 (LIVS…WWLV), 82 to 102 (AKFA…SKKV), and 107 to 127 (SIFF…AYLK).

The protein belongs to the SirB2 family.

Its subcellular location is the cell inner membrane. In Haemophilus influenzae (strain ATCC 51907 / DSM 11121 / KW20 / Rd), this protein is Protein HI_1253.